The following is a 60-amino-acid chain: UPF0434 protein ETA_21370 (60 aa).

The protein belongs to the UPF0434 family.

In Erwinia tasmaniensis (strain DSM 17950 / CFBP 7177 / CIP 109463 / NCPPB 4357 / Et1/99), this protein is UPF0434 protein ETA_21370.